The following is a 147-amino-acid chain: Calmodulin (147 aa).

4 EF-hand domains span residues E8–S43, P44–C79, D81–K116, and A120–K147. The Ca(2+) site is built by D21, D23, S25, S27, E32, D57, D59, N61, E68, D94, N96, D98, and E105.

The protein belongs to the calmodulin family.

Its function is as follows. Calmodulin mediates the control of a large number of enzymes, ion channels and other proteins by Ca(2+). Among the enzymes to be stimulated by the calmodulin-Ca(2+) complex are a number of protein kinases and phosphatases. The sequence is that of Calmodulin (CMD1) from Kluyveromyces lactis (strain ATCC 8585 / CBS 2359 / DSM 70799 / NBRC 1267 / NRRL Y-1140 / WM37) (Yeast).